Consider the following 363-residue polypeptide: Pyrimidine monooxygenase RutA (363 aa).

Residues 49-50, Asn-115, Glu-124, 140-141, and Ser-190 each bind FMN; these read IK and RY.

Belongs to the NtaA/SnaA/DszA monooxygenase family. RutA subfamily.

It carries out the reaction uracil + FMNH2 + NADH + O2 = (Z)-3-ureidoacrylate + FMN + NAD(+) + H2O + H(+). The catalysed reaction is thymine + FMNH2 + NADH + O2 = (Z)-2-methylureidoacrylate + FMN + NAD(+) + H2O + H(+). In terms of biological role, catalyzes the pyrimidine ring opening between N-3 and C-4 by an unusual flavin hydroperoxide-catalyzed mechanism, adding oxygen atoms in the process to yield ureidoacrylate peracid, that immediately reacts with FMN forming ureidoacrylate and FMN-N(5)-oxide. The FMN-N(5)-oxide reacts spontaneously with NADH to produce FMN. Requires the flavin reductase RutF to regenerate FMN in vivo. The polypeptide is Pyrimidine monooxygenase RutA (Escherichia coli O6:K15:H31 (strain 536 / UPEC)).